The following is a 335-amino-acid chain: MMEGHILFFFLVVMVQFVTGVLANGLIVVVHAIDLIMWKKMAPLDLLLFCLATSRIILQLCILFAQLCLFSLVRHTLFEDNITFVFIINELSLWFATWLGVFYCAKIATIPHPLFLWLKMRISRLVPWLILGSVLYVIITTFIHSRETSAILKPIFISLFPKNATQVGTGHATLLSVLVLGLTLPLFIFTVAVLLLIYSLWNYSRQMRTMVGTREYSGHAHISAMLSILSFLILYLSHYMVAVLISTQVLYLGSRTFVFCLLVIGMYPSIHSIVLILGNPKLKRNAKMFIVHCKCCHCTRAWVTSRSPRLSDLPVPPTHPSANKTSCSEACIMPS.

The Extracellular segment spans residues 1–7; the sequence is MMEGHIL. Residues 8–28 form a helical membrane-spanning segment; it reads FFFLVVMVQFVTGVLANGLIV. Over 29-43 the chain is Cytoplasmic; it reads VVHAIDLIMWKKMAP. A helical transmembrane segment spans residues 44–64; it reads LDLLLFCLATSRIILQLCILF. Over 65–81 the chain is Extracellular; the sequence is AQLCLFSLVRHTLFEDN. Asn-81 carries N-linked (GlcNAc...) asparagine glycosylation. The helical transmembrane segment at 82-102 threads the bilayer; that stretch reads ITFVFIINELSLWFATWLGVF. Residues 103–124 are Cytoplasmic-facing; that stretch reads YCAKIATIPHPLFLWLKMRISR. Residues 125–145 form a helical membrane-spanning segment; the sequence is LVPWLILGSVLYVIITTFIHS. Topologically, residues 146 to 176 are extracellular; the sequence is RETSAILKPIFISLFPKNATQVGTGHATLLS. Residue Asn-163 is glycosylated (N-linked (GlcNAc...) asparagine). The helical transmembrane segment at 177 to 197 threads the bilayer; that stretch reads VLVLGLTLPLFIFTVAVLLLI. Over 198 to 224 the chain is Cytoplasmic; that stretch reads YSLWNYSRQMRTMVGTREYSGHAHISA. The helical transmembrane segment at 225–245 threads the bilayer; that stretch reads MLSILSFLILYLSHYMVAVLI. At 246 to 256 the chain is on the extracellular side; sequence STQVLYLGSRT. A helical membrane pass occupies residues 257 to 277; that stretch reads FVFCLLVIGMYPSIHSIVLIL. Residues 278–335 are Cytoplasmic-facing; that stretch reads GNPKLKRNAKMFIVHCKCCHCTRAWVTSRSPRLSDLPVPPTHPSANKTSCSEACIMPS. Positions 308-327 are disordered; that stretch reads PRLSDLPVPPTHPSANKTSC.

Belongs to the G-protein coupled receptor T2R family. Expressed in subsets of taste receptor cells of the tongue and palate epithelium and exclusively in gustducin-positive cells. Expressed in the duodenum, antrum and fundus (part of the stomach).

It is found in the membrane. Its function is as follows. Gustducin-coupled receptor implicated in the perception of bitter compounds in the oral cavity and the gastrointestinal tract. Signals through PLCB2 and the calcium-regulated cation channel TRPM5. This Rattus norvegicus (Rat) protein is Taste receptor type 2 member 119 (Tas2r119).